We begin with the raw amino-acid sequence, 830 residues long: DNA-directed RNA polymerase subunit beta'' (830 aa).

Positions 219, 291, 298, and 301 each coordinate Zn(2+).

The protein belongs to the RNA polymerase beta' chain family. RpoC2 subfamily. As to quaternary structure, in plastids the minimal PEP RNA polymerase catalytic core is composed of four subunits: alpha, beta, beta', and beta''. When a (nuclear-encoded) sigma factor is associated with the core the holoenzyme is formed, which can initiate transcription. Zn(2+) is required as a cofactor.

The protein localises to the plastid. The protein resides in the chloroplast. The enzyme catalyses RNA(n) + a ribonucleoside 5'-triphosphate = RNA(n+1) + diphosphate. Its function is as follows. DNA-dependent RNA polymerase catalyzes the transcription of DNA into RNA using the four ribonucleoside triphosphates as substrates. In Euglena gracilis, this protein is DNA-directed RNA polymerase subunit beta'' (rpoC2).